The sequence spans 539 residues: Effector protein hopAB1 (539 aa).

4 disordered regions span residues 1–93 (MPGI…PEAQ), 163–220 (QTVR…RHPQ), 230–249 (ASAA…LRRL), and 315–336 (RQTT…SGRR). Residues 18–31 (TDGEPVTEREHDSS) show a composition bias toward basic and acidic residues. The segment covering 181 to 194 (SSSGSSQRSLIGRS) has biased composition (low complexity).

The protein belongs to the HopAB family.

The protein localises to the secreted. Its function is as follows. Effector protein that plays different roles depending on the species and plant cultivars that interact with the pathogen. Acts as a virulence determinant by enhancing the development of disease symptoms and bacterial growth. Acts as an avirulence factor by eliciting hypersensitive response (HR) and plant resistance. This chain is Effector protein hopAB1 (hopAB1), found in Pseudomonas savastanoi pv. phaseolicola (strain 1448A / Race 6) (Pseudomonas syringae pv. phaseolicola (strain 1448A / Race 6)).